The chain runs to 1032 residues: Exportin-T (1032 aa).

It belongs to the exportin family.

It localises to the nucleus. It is found in the cytoplasm. TRNA nucleus export receptor which facilitates tRNA translocation across the nuclear pore complex. Involved in pre-tRNA splicing, probably by affecting the interaction of pre-tRNA with splicing endonuclease. The chain is Exportin-T (los1) from Aspergillus fumigatus (strain CBS 144.89 / FGSC A1163 / CEA10) (Neosartorya fumigata).